Here is a 472-residue protein sequence, read N- to C-terminus: Type I restriction enzyme BthVORF4518P methylase subunit (472 aa).

Residues 151-156 (QYFTPR), 181-183 (TGG), aspartate 214, and 243-244 (DS) each bind S-adenosyl-L-methionine.

This sequence belongs to the N(4)/N(6)-methyltransferase family. As to quaternary structure, the type I restriction/modification system is composed of three polypeptides R, M and S; the restriction enzyme has stoichiometry R(2)M(2)S(1) while the methyltransferase is M(2)S(1).

The enzyme catalyses a 2'-deoxyadenosine in DNA + S-adenosyl-L-methionine = an N(6)-methyl-2'-deoxyadenosine in DNA + S-adenosyl-L-homocysteine + H(+). Functionally, the subtype gamma methyltransferase (M) subunit of a type I restriction enzyme. The M and S subunits together form a methyltransferase (MTase) that methylates two adenine residues of an undetermined sequence. In the presence of the R subunit the complex can also act as an endonuclease, binding to the same target sequence but cutting the DNA some distance from this site. Whether the DNA is cut or modified depends on the methylation state of the target sequence. When the target site is unmodified, the DNA is cut. When the target site is hemimethylated, the complex acts as a maintenance MTase modifying the DNA so that both strands become methylated. After locating a non-methylated recognition site, the enzyme complex serves as a molecular motor that translocates DNA in an ATP-dependent manner until a collision occurs that triggers cleavage. The sequence is that of Type I restriction enzyme BthVORF4518P methylase subunit from Bacteroides thetaiotaomicron (strain ATCC 29148 / DSM 2079 / JCM 5827 / CCUG 10774 / NCTC 10582 / VPI-5482 / E50).